We begin with the raw amino-acid sequence, 1239 residues long: Anion exchange protein 2 (1239 aa).

A disordered region spans residues 1 to 237 (MSSAPRRPAK…HRSYNLQERR (237 aa)). The Cytoplasmic portion of the chain corresponds to 1 to 706 (MSSAPRRPAK…DFRDALDPQC (706 aa)). Basic and acidic residues-rich tracts occupy residues 37 to 49 (ELHR…RFEE) and 58 to 75 (GGEE…EYHR). Composition is skewed to basic residues over residues 76 to 85 (QSSHHIHHPL) and 94 to 110 (RRRK…RRRP). Phosphoserine occurs at positions 113, 132, 144, 170, and 172. Over residues 120 to 133 (TIEEGEEDEDEASE) the composition is skewed to acidic residues. Over residues 141–155 (TQPSPVSTPSSVQFF) the composition is skewed to low complexity. Residues 189-207 (GAQAGTQVEEAEAVAVASG) show a composition bias toward low complexity. Over residues 208–217 (TAGGDDGGAS) the composition is skewed to gly residues. Ser241 is modified (phosphoserine). The residue at position 255 (Thr255) is a Phosphothreonine. The residue at position 272 (Lys272) is an N6-methyllysine. A disordered region spans residues 285-318 (HLVRKNAKGSTQSGREGREPGPTPRARPRAPHKP). Ser441 carries the post-translational modification Phosphoserine. The interval 447–468 (SLLGHHHGQGAESDPHVTEPLI) is disordered. Membrane (anion exchange) stretches follow at residues 706–1239 (CLAA…PMPV) and 708–1239 (AAVI…PMPV). Helical transmembrane passes span 707 to 727 (LAAV…FGGL), 752 to 772 (FCLL…LLVF), 794 to 814 (IGFW…SFLV), and 824 to 844 (IFAF…LVKI). Topologically, residues 845 to 895 (FQEHPLHGCSASNSSEVDGGENMTWAVARPTLGPGNRSLAGQSGQGKPRGQ) are extracellular. N-linked (GlcNAc...) asparagine glycans are attached at residues Asn857, Asn866, and Asn880. Residues 896–916 (PNTALLSLVLMAGTFFIAFFL) traverse the membrane as a helical segment. Topologically, residues 917-931 (RKFKNSRFFPGRIRR) are cytoplasmic. The next 5 membrane-spanning stretches (helical) occupy residues 932 to 952 (VIGD…DYSI), 987 to 1007 (FPVW…ILIF), 1034 to 1054 (LLLI…WLAA), 1088 to 1108 (RVTG…GDLL), and 1111 to 1131 (IPLA…LNGI). Residue Cys1171 is the site of S-palmitoyl cysteine attachment. A helical membrane pass occupies residues 1172–1192 (LALLWAVMSTAASLAFPFILI).

This sequence belongs to the anion exchanger (TC 2.A.31) family.

The protein resides in the apical cell membrane. Its subcellular location is the basolateral cell membrane. It catalyses the reaction hydrogencarbonate(in) + chloride(out) = hydrogencarbonate(out) + chloride(in). Functionally, sodium-independent anion exchanger which mediates the electroneutral exchange of chloride for bicarbonate ions across the cell membrane. Plays an important role in osteoclast differentiation and function. Regulates bone resorption and calpain-dependent actin cytoskeleton organization in osteoclasts via anion exchange-dependent control of pH. Essential for intracellular pH regulation in CD8(+) T-cells upon CD3 stimulation, modulating CD8(+) T-cell response. The protein is Anion exchange protein 2 (SLC4A2) of Pongo abelii (Sumatran orangutan).